Consider the following 321-residue polypeptide: MECDKCGRDAVMHAAYSGAHLCDDHFCASVEKRVRRRIREDNMLPRDASPENPQTWVIGLSGGKDSVVLTHILDDTFGRDPRIELVALTIHEGIEGYRDKSVDACVELAEDLDIHHELVTYEDEFGVQMDDVVEKDPENMAACAYCGVFRRDLLERFADELGADKLLTGHNLDDEAQTALMNFFEGDLKQVAKHFDASIGDFEKRRDAGEFIPRAKPLRDVPEKEVALYAHLKDLPAHITECPHSSEAYRGEIQQLLLKLEENHPGTRHSIMAGYEELAELTAREYRGEGRVDLNDCERCGSKTAGDVCRKCRLIESIEAV.

Residue Lys204 forms a Glycyl lysine isopeptide (Lys-Gly) (interchain with G-Cter in SAMP2) linkage.

Belongs to the TtcA family. CTU1/NCS6/ATPBD3 subfamily. As to quaternary structure, interacts with monomeric and polymeric forms of SAMP2. Interacts with UbaA. Interacts with archaeal EF-1-alpha and Pan1. Non-sampylated protein forms a complex with archaeal CPSF1 of approximately 100 kDa. Post-translationally, sampylated at Lys-204 with the archaeal ubiquitin-like protein SAMP2. Polymeric chains of SAMP2 are also linked.

It functions in the pathway tRNA modification; 5-methoxycarbonylmethyl-2-thiouridine-tRNA biosynthesis. Required for thiolation of mcm(5)S(2)U at the wobble uridine position of tRNA specific for lysine (tRNA(Lys)). Probably acts by catalyzing adenylation of tRNA, an intermediate required for 2-thiolation. May also act as a sulfurtransferase that transfers sulfur from thiocarboxylated SAMP2 onto the uridine of tRNA at wobble position. Required for cell growth at elevated temperatures. The chain is tRNA 2-thiolation protein NcsA from Haloferax volcanii (strain ATCC 29605 / DSM 3757 / JCM 8879 / NBRC 14742 / NCIMB 2012 / VKM B-1768 / DS2) (Halobacterium volcanii).